Here is a 288-residue protein sequence, read N- to C-terminus: Shikimate dehydrogenase (NADP(+)) (288 aa).

Residues 14 to 16 (SIS) and T63 contribute to the shikimate site. K67 acts as the Proton acceptor in catalysis. E79 contacts NADP(+). Shikimate is bound by residues N88 and D103. NADP(+)-binding positions include 127-131 (GSGGA), 151-156 (NRTYEK), and M219. Y221 is a shikimate binding site. G242 contacts NADP(+).

The protein belongs to the shikimate dehydrogenase family. Homodimer.

The catalysed reaction is shikimate + NADP(+) = 3-dehydroshikimate + NADPH + H(+). Its pathway is metabolic intermediate biosynthesis; chorismate biosynthesis; chorismate from D-erythrose 4-phosphate and phosphoenolpyruvate: step 4/7. In terms of biological role, involved in the biosynthesis of the chorismate, which leads to the biosynthesis of aromatic amino acids. Catalyzes the reversible NADPH linked reduction of 3-dehydroshikimate (DHSA) to yield shikimate (SA). The polypeptide is Shikimate dehydrogenase (NADP(+)) (Caldicellulosiruptor bescii (strain ATCC BAA-1888 / DSM 6725 / KCTC 15123 / Z-1320) (Anaerocellum thermophilum)).